Reading from the N-terminus, the 238-residue chain is uncharacterized protein (238 aa).

One can recognise an S4 RNA-binding domain in the interval 1 to 64; that stretch reads MRLDKYLSKS…KPKKNVYLML (64 aa). The active-site Nucleophile is the D103.

Belongs to the pseudouridine synthase RsuA family.

The enzyme catalyses a uridine in RNA = a pseudouridine in RNA. This is an uncharacterized protein from Aquifex aeolicus (strain VF5).